The chain runs to 2531 residues: Highly reducing polyketide synthase gloL (2531 aa).

In terms of domain architecture, Ketosynthase family 3 (KS3) spans 15–435 (YEPLAIVGMG…GANAHVILDS (421 aa)). Catalysis depends on for beta-ketoacyl synthase activity residues C187, H322, and H358. Positions 449-525 (TNGLSVNGHS…GHSVNGHSKP (77 aa)) are disordered. A compositionally biased stretch (low complexity) spans 453–503 (SVNGHSINGNSVNGHSVNGHSTNGHSINGNSVNGHSVNGNSVNGHSTNGHS). The segment covering 505-521 (NGHSANGNSINGHSVNG) has biased composition (polar residues). Positions 602 to 909 (MVFTGQGAQW…VTALERGKDC (308 aa)) are malonyl-CoA:ACP transacylase (MAT) domain. The N-terminal hotdog fold stretch occupies residues 971-1099 (HEILGSRTVE…GQIRSGTDNP (129 aa)). Residues 971-1251 (HEILGSRTVE…GGQFSPIEED (281 aa)) are dehydratase (DH) domain. The PKS/mFAS DH domain occupies 971–1254 (HEILGSRTVE…FSPIEEDSSD (284 aa)). H1003 serves as the catalytic Proton acceptor; for dehydratase activity. The C-terminal hotdog fold stretch occupies residues 1109–1254 (DHPRSVPSPY…FSPIEEDSSD (146 aa)). The active-site Proton donor; for dehydratase activity is D1169. Positions 1419–1597 (DFFTAAGHSK…FSGCDATVYD (179 aa)) are methyltransferase (CMet) domain. An enoyl reductase (ER) (ER) domain region spans residues 1806–2114 (GLLQTLRWVP…KGSHIGKIVV (309 aa)). Residues 2139–2312 (GYLLVGGLGG…ASVVDIGVMG (174 aa)) are ketoreductase (KR) domain. The Carrier domain occupies 2413-2505 (MSSVETDSSI…ALGLLTIEGL (93 aa)). S2464 is modified (O-(pantetheine 4'-phosphoryl)serine).

It functions in the pathway mycotoxin biosynthesis. In terms of biological role, highly reducing polyketide synthase; part of the gene cluster that mediates the biosynthesis of pneumocandins, lipohexapeptides of the echinocandin family that prevent fungal cell wall formation by non-competitive inhibition of beta-1,3-glucan synthase. The 10,12-dimethylmyristoyl side chain is synthesized by the reducing polyketide synthase gloL/GLPKS4. The thioesterase gloN/GLHYD exclusively interacts with gloL/GLPKS4 to maintain turnover of the polyketide side chain. The 10R,12S-dimethylmyristic acid is then transferred to the first thiolation domain of the nonribosomal peptide synthetase gloA/GLNRPS4 by the acyl-AMP ligase gloD/GLligase, followed by its acylation to L-ornithine to trigger elongation of the cyclic hexapeptide. L-ornithine, 4R-hydroxyl-L-proline (generated from L-proline by the dioxygenase gloF/GLOXY2), 3S-hydroxyl-L-homotyrosine (generated by gloG/GLHtyB, gloH/GLHtyA, gloI/GLHtyC, gloJ/GLHtyD and hydroxylated at C-3 by the dioxygenase gloM/GLOXY1), 3R-hydroxyl-L-glutamine (generated from L-glutamine probably by the dioxygenase gloE/GLOXY3) and 3S-hydroxyl-L-proline (generated from L-proline by the dioxygenase gloF/GLOXY2 to yield pneumocandin B0), or 3S-hydroxyl-4S-methyl-L-proline (generated from L-leucine by the dioxygenase gloC/GLOXY4 to yield pneumocandin A0) are sequentially added to the growing chain. The last C domain of gloA/GLNRPS4 is proposed to be responsible for cyclization by condensation to form the peptide bond between L-ornithine and 3S-hydroxyl-4S-methyl-L-proline (for pneumocandin A0) or 3S-hydroxyl-L-proline (for pneumocandin B0). Finally, the subsequent C-4 hydroxylation of 3S-hydroxyl-L-homotyrosine and L-ornithine dihydroxylation at C-4 and C-5 are performed by the cytochrome P450 monooxygenases gloP/GLP450-1 and gloO/GLP450-2, respectively. The chain is Highly reducing polyketide synthase gloL from Glarea lozoyensis (strain ATCC 20868 / MF5171).